The following is a 336-amino-acid chain: Glucokinase (336 aa).

12 to 17 contributes to the ATP binding site; that stretch reads ADIGGT.

Belongs to the bacterial glucokinase family.

The protein resides in the cytoplasm. The catalysed reaction is D-glucose + ATP = D-glucose 6-phosphate + ADP + H(+). The polypeptide is Glucokinase (Helicobacter pylori (strain P12)).